Here is a 230-residue protein sequence, read N- to C-terminus: Cytidylate kinase (230 aa).

Position 11–19 (G11–T19) interacts with ATP.

This sequence belongs to the cytidylate kinase family. Type 1 subfamily.

It is found in the cytoplasm. The catalysed reaction is CMP + ATP = CDP + ADP. It carries out the reaction dCMP + ATP = dCDP + ADP. The polypeptide is Cytidylate kinase (Chloroflexus aggregans (strain MD-66 / DSM 9485)).